Here is a 148-residue protein sequence, read N- to C-terminus: Transcriptional regulator MraZ (148 aa).

SpoVT-AbrB domains lie at 5–51 (ATSL…PLPA) and 80–123 (AEDV…SMEA).

The protein belongs to the MraZ family. In terms of assembly, forms oligomers.

It localises to the cytoplasm. Its subcellular location is the nucleoid. The chain is Transcriptional regulator MraZ from Methylobacillus flagellatus (strain ATCC 51484 / DSM 6875 / VKM B-1610 / KT).